We begin with the raw amino-acid sequence, 276 residues long: Small ribosomal subunit protein uS5w (276 aa).

The segment covering M1–F15 has biased composition (basic and acidic residues). The interval M1–E42 is disordered. Residues G16–G28 are compositionally biased toward gly residues. The 64-residue stretch at L87–I150 folds into the S5 DRBM domain.

It belongs to the universal ribosomal protein uS5 family.

The sequence is that of Small ribosomal subunit protein uS5w (RPS2D) from Arabidopsis thaliana (Mouse-ear cress).